A 477-amino-acid chain; its full sequence is Argininosuccinate lyase (477 aa).

The protein belongs to the lyase 1 family. Argininosuccinate lyase subfamily.

The protein localises to the cytoplasm. The enzyme catalyses 2-(N(omega)-L-arginino)succinate = fumarate + L-arginine. It functions in the pathway amino-acid biosynthesis; L-arginine biosynthesis; L-arginine from L-ornithine and carbamoyl phosphate: step 3/3. The polypeptide is Argininosuccinate lyase (Corynebacterium efficiens (strain DSM 44549 / YS-314 / AJ 12310 / JCM 11189 / NBRC 100395)).